The chain runs to 264 residues: Thiazole synthase (264 aa).

Lys106 functions as the Schiff-base intermediate with DXP in the catalytic mechanism. 1-deoxy-D-xylulose 5-phosphate is bound by residues Gly167, 193–194 (AG), and 215–216 (NS).

The protein belongs to the ThiG family. In terms of assembly, homotetramer. Forms heterodimers with either ThiH or ThiS.

The protein resides in the cytoplasm. It carries out the reaction [ThiS sulfur-carrier protein]-C-terminal-Gly-aminoethanethioate + 2-iminoacetate + 1-deoxy-D-xylulose 5-phosphate = [ThiS sulfur-carrier protein]-C-terminal Gly-Gly + 2-[(2R,5Z)-2-carboxy-4-methylthiazol-5(2H)-ylidene]ethyl phosphate + 2 H2O + H(+). The protein operates within cofactor biosynthesis; thiamine diphosphate biosynthesis. Its function is as follows. Catalyzes the rearrangement of 1-deoxy-D-xylulose 5-phosphate (DXP) to produce the thiazole phosphate moiety of thiamine. Sulfur is provided by the thiocarboxylate moiety of the carrier protein ThiS. In vitro, sulfur can be provided by H(2)S. This chain is Thiazole synthase, found in Ectopseudomonas mendocina (strain ymp) (Pseudomonas mendocina).